A 216-amino-acid chain; its full sequence is SPbeta prophage-derived uncharacterized protein YomX (216 aa).

The sequence is that of SPbeta prophage-derived uncharacterized protein YomX (yomX) from Bacillus subtilis (strain 168).